Consider the following 100-residue polypeptide: NADH-quinone oxidoreductase subunit K (100 aa).

The next 3 membrane-spanning stretches (helical) occupy residues 1 to 21 (MIGL…GLAG), 28 to 48 (ILLL…GFIA), and 64 to 84 (FIIA…ILWF).

This sequence belongs to the complex I subunit 4L family. As to quaternary structure, NDH-1 is composed of 14 different subunits. Subunits NuoA, H, J, K, L, M, N constitute the membrane sector of the complex.

It localises to the cell inner membrane. The catalysed reaction is a quinone + NADH + 5 H(+)(in) = a quinol + NAD(+) + 4 H(+)(out). Its function is as follows. NDH-1 shuttles electrons from NADH, via FMN and iron-sulfur (Fe-S) centers, to quinones in the respiratory chain. The immediate electron acceptor for the enzyme in this species is believed to be ubiquinone. Couples the redox reaction to proton translocation (for every two electrons transferred, four hydrogen ions are translocated across the cytoplasmic membrane), and thus conserves the redox energy in a proton gradient. The sequence is that of NADH-quinone oxidoreductase subunit K from Helicobacter acinonychis (strain Sheeba).